We begin with the raw amino-acid sequence, 263 residues long: 3'-5' ssDNA/RNA exonuclease TatD (263 aa).

The a divalent metal cation site is built by Glu91, His127, and His152.

This sequence belongs to the metallo-dependent hydrolases superfamily. TatD-type hydrolase family. TatD subfamily. As to quaternary structure, monomer. The cofactor is Mg(2+).

Its subcellular location is the cytoplasm. In terms of biological role, 3'-5' exonuclease that prefers single-stranded DNA and RNA. May play a role in the H(2)O(2)-induced DNA damage repair. The sequence is that of 3'-5' ssDNA/RNA exonuclease TatD from Cronobacter sakazakii (strain ATCC BAA-894) (Enterobacter sakazakii).